The primary structure comprises 181 residues: Probable pyruvoyl-dependent arginine decarboxylase (181 aa).

The residue at position 43 (S43) is a Pyruvic acid (Ser).

This sequence belongs to the PdaD family. Pyruvate is required as a cofactor.

It carries out the reaction L-arginine + H(+) = agmatine + CO2. In Chlorobaculum parvum (strain DSM 263 / NCIMB 8327) (Chlorobium vibrioforme subsp. thiosulfatophilum), this protein is Probable pyruvoyl-dependent arginine decarboxylase.